The chain runs to 419 residues: UDP-N-acetylglucosamine 1-carboxyvinyltransferase (419 aa).

22-23 (KN) contacts phosphoenolpyruvate. Arginine 92 contributes to the UDP-N-acetyl-alpha-D-glucosamine binding site. The active-site Proton donor is cysteine 116. Position 116 is a 2-(S-cysteinyl)pyruvic acid O-phosphothioketal (cysteine 116). Residues 121-125 (RPIDQ), aspartate 305, and isoleucine 327 contribute to the UDP-N-acetyl-alpha-D-glucosamine site.

It belongs to the EPSP synthase family. MurA subfamily.

It is found in the cytoplasm. It catalyses the reaction phosphoenolpyruvate + UDP-N-acetyl-alpha-D-glucosamine = UDP-N-acetyl-3-O-(1-carboxyvinyl)-alpha-D-glucosamine + phosphate. It functions in the pathway cell wall biogenesis; peptidoglycan biosynthesis. Functionally, cell wall formation. Adds enolpyruvyl to UDP-N-acetylglucosamine. The protein is UDP-N-acetylglucosamine 1-carboxyvinyltransferase of Trichlorobacter lovleyi (strain ATCC BAA-1151 / DSM 17278 / SZ) (Geobacter lovleyi).